Reading from the N-terminus, the 1593-residue chain is Autotransporter CRAC (1593 aa).

An N-terminal signal peptide occupies residues 1–54 (MNKVYNTVWNESTGMWVVTSELTRKGGRRPRQIRRTALAGLIAGLLLPSAPALA). The segment covering 65 to 85 (GATSSSMSLNAGDTATDTTIN) has biased composition (polar residues). Disordered stretches follow at residues 65–100 (GATSSSMSLNAGDTATDTTINSGGSQRVSSGGSATS) and 1267–1286 (KADSSQPGTDNPGTDNPVPP). The span at 86–97 (SGGSQRVSSGGS) shows a compositional bias: low complexity. Positions 1269–1280 (DSSQPGTDNPGT) are enriched in polar residues. Residues 1325–1593 (NTRSPGGVWG…TGSVGFRINF (269 aa)) enclose the Autotransporter domain.

In terms of processing, glycosylated by heptosyltransferas BAHTCr. Glycosylation is required for adhesion to mammalian cells and colonization of the mouse host gastrointestinal tract.

It localises to the cell outer membrane. Its function is as follows. Autotransporter required for the colonization of the mouse host gastrointestinal tract, possibly by mediating bacteria adhesion to host cells. The chain is Autotransporter CRAC from Citrobacter rodentium (strain ICC168) (Citrobacter freundii biotype 4280).